We begin with the raw amino-acid sequence, 328 residues long: CMP-N-acetylneuraminate-beta-galactosamide-alpha-2,3-sialyltransferase 4 (328 aa).

Over 1 to 7 (MCPAGWK) the chain is Cytoplasmic. Residues 8–25 (LLAMLALVLVVMVWYSIS) traverse the membrane as a helical; Signal-anchor for type II membrane protein segment. Residues 26 to 328 (REDSFYFPIP…MGAVKNLTSF (303 aa)) lie on the Lumenal side of the membrane. N-linked (GlcNAc...) asparagine glycosylation is found at asparagine 56, asparagine 126, asparagine 305, and asparagine 324. The cysteines at positions 115 and 268 are disulfide-linked.

The protein belongs to the glycosyltransferase 29 family. Post-translationally, the soluble form derives from the membrane form by proteolytic processing.

It is found in the golgi apparatus. It localises to the golgi stack membrane. The protein localises to the secreted. The catalysed reaction is a beta-D-galactosyl-(1-&gt;3)-N-acetyl-beta-D-galactosaminyl derivative + CMP-N-acetyl-beta-neuraminate = an N-acetyl-alpha-neuraminyl-(2-&gt;3)-beta-D-galactosyl-(1-&gt;3)-N-acetyl-beta-D-galactosaminyl derivative + CMP + H(+). The enzyme catalyses a beta-D-galactosyl-(1-&gt;3)-N-acetyl-alpha-D-galactosaminyl derivative + CMP-N-acetyl-beta-neuraminate = an N-acetyl-alpha-neuraminyl-(2-&gt;3)-beta-D-galactosyl-(1-&gt;3)-N-acetyl-alpha-D-galactosaminyl derivative + CMP + H(+). It catalyses the reaction a beta-D-galactosyl-(1-&gt;4)-N-acetyl-beta-D-glucosaminyl derivative + CMP-N-acetyl-beta-neuraminate = an N-acetyl-alpha-neuraminyl-(2-&gt;3)-beta-D-galactosyl-(1-&gt;4)-N-acetyl-beta-D-glucosaminyl derivative + CMP + H(+). It carries out the reaction a ganglioside GM1 (d18:1(4E)) + CMP-N-acetyl-beta-neuraminate = a ganglioside GD1a (d18:1(4E)) + CMP + H(+). The catalysed reaction is a ganglioside GA1 (d18:1(4E)) + CMP-N-acetyl-beta-neuraminate = a ganglioside GM1b (d18:1(4E)) + CMP + H(+). The enzyme catalyses a ganglioside GT1c (d18:1(4E)) + CMP-N-acetyl-beta-neuraminate = a ganglioside GQ1c (d18:1(4E)) + CMP + H(+). It catalyses the reaction a neolactoside nLc4Cer + CMP-N-acetyl-beta-neuraminate = a neolactoside IV(3)-alpha-NeuAc-nLc4Cer + CMP + H(+). It carries out the reaction a neolactoside nLc4Cer(d18:1(4E)) + CMP-N-acetyl-beta-neuraminate = a neolactoside IV(3)-alpha-NeuAc-nLc4Cer(d18:1(4E)) + CMP + H(+). The protein operates within protein modification; protein glycosylation. It functions in the pathway glycolipid biosynthesis. Functionally, a beta-galactoside alpha2-3 sialyltransferase involved in terminal sialylation of glycoproteins and glycolipids. Catalyzes the transfer of sialic acid (N-acetyl-neuraminic acid; Neu5Ac) from the nucleotide sugar donor CMP-Neu5Ac onto acceptor Galbeta-(1-&gt;3)-GalNAc- and Galbeta-(1-&gt;4)-GlcNAc-terminated glycoconjugates through an alpha2-3 linkage. Plays a major role in hemostasis. Responsible for sialylation of plasma VWF/von Willebrand factor, preventing its recognition by asialoglycoprotein receptors (ASGPR) and subsequent clearance. Regulates ASGPR-mediated clearance of platelets. Participates in the biosynthesis of the sialyl Lewis X epitopes, both on O- and N-glycans, which are recognized by SELE/E-selectin, SELP/P-selectin and SELL/L-selectin. Essential for selectin-mediated rolling and adhesion of leukocytes during extravasation. Contributes to adhesion and transendothelial migration of neutrophils likely through terminal sialylation of CXCR2. In glycosphingolipid biosynthesis, sialylates GM1 and GA1 gangliosides to form GD1a and GM1b, respectively. Metabolizes brain c-series ganglioside GT1c forming GQ1c. Synthesizes ganglioside LM1 (IV3Neu5Ac-nLc4Cer), a major structural component of peripheral nerve myelin. In Pan troglodytes (Chimpanzee), this protein is CMP-N-acetylneuraminate-beta-galactosamide-alpha-2,3-sialyltransferase 4 (ST3GAL4).